We begin with the raw amino-acid sequence, 140 residues long: MERTLTILKPDCVRKQLIGAVIDKIERAGFRVVAMKKTRLTQETAGEFYAVHRERPFYGELVEFMSSGPCVPMILEKENAVADFRTLIGATDPAQADEGTVRKLYADSKGENIVHGSDSAENAAVEAGFFFSAEEVVRVD.

The ATP site is built by lysine 9, phenylalanine 57, arginine 85, threonine 91, arginine 102, and asparagine 112. Histidine 115 acts as the Pros-phosphohistidine intermediate in catalysis.

It belongs to the NDK family. Homotetramer. It depends on Mg(2+) as a cofactor.

Its subcellular location is the cytoplasm. It catalyses the reaction a 2'-deoxyribonucleoside 5'-diphosphate + ATP = a 2'-deoxyribonucleoside 5'-triphosphate + ADP. The enzyme catalyses a ribonucleoside 5'-diphosphate + ATP = a ribonucleoside 5'-triphosphate + ADP. In terms of biological role, major role in the synthesis of nucleoside triphosphates other than ATP. The ATP gamma phosphate is transferred to the NDP beta phosphate via a ping-pong mechanism, using a phosphorylated active-site intermediate. The polypeptide is Nucleoside diphosphate kinase (Chlorobium limicola (strain DSM 245 / NBRC 103803 / 6330)).